A 602-amino-acid polypeptide reads, in one-letter code: Elongation factor 4 (602 aa).

A tr-type G domain is found at 7-189 (KYIRNFSIVA…AIVNKVPAPD (183 aa)). Residues 19 to 24 (DHGKST) and 136 to 139 (NKID) contribute to the GTP site.

This sequence belongs to the TRAFAC class translation factor GTPase superfamily. Classic translation factor GTPase family. LepA subfamily.

It is found in the cell membrane. It carries out the reaction GTP + H2O = GDP + phosphate + H(+). Required for accurate and efficient protein synthesis under certain stress conditions. May act as a fidelity factor of the translation reaction, by catalyzing a one-codon backward translocation of tRNAs on improperly translocated ribosomes. Back-translocation proceeds from a post-translocation (POST) complex to a pre-translocation (PRE) complex, thus giving elongation factor G a second chance to translocate the tRNAs correctly. Binds to ribosomes in a GTP-dependent manner. The chain is Elongation factor 4 from Clostridium botulinum (strain 657 / Type Ba4).